The chain runs to 272 residues: Elongation factor Ts (272 aa).

The segment at 86–89 (TDFV) is involved in Mg(2+) ion dislocation from EF-Tu.

Belongs to the EF-Ts family.

It is found in the cytoplasm. In terms of biological role, associates with the EF-Tu.GDP complex and induces the exchange of GDP to GTP. It remains bound to the aminoacyl-tRNA.EF-Tu.GTP complex up to the GTP hydrolysis stage on the ribosome. This chain is Elongation factor Ts, found in Blochmanniella pennsylvanica (strain BPEN).